A 609-amino-acid chain; its full sequence is Phosphoenolpyruvate carboxykinase [GTP] (609 aa).

Substrate-binding positions include Arg81 and 220-222 (YGG). 2 residues coordinate Mn(2+): Lys229 and His249. Ser271 lines the substrate pocket. 272–277 (ACGKTN) is a GTP binding site. The active site involves Cys273. A Mn(2+)-binding site is contributed by Asp296. Position 387–389 (387–389 (NSR)) interacts with substrate. GTP contacts are provided by residues Arg389, Arg420, and 515 to 518 (FGEN).

It belongs to the phosphoenolpyruvate carboxykinase [GTP] family. As to quaternary structure, monomer. Mn(2+) is required as a cofactor.

The protein resides in the cytoplasm. The catalysed reaction is oxaloacetate + GTP = phosphoenolpyruvate + GDP + CO2. The protein operates within carbohydrate biosynthesis; gluconeogenesis. Functionally, catalyzes the conversion of oxaloacetate (OAA) to phosphoenolpyruvate (PEP), the rate-limiting step in the metabolic pathway that produces glucose from lactate and other precursors derived from the citric acid cycle. The sequence is that of Phosphoenolpyruvate carboxykinase [GTP] from Mycobacterium leprae (strain Br4923).